The sequence spans 375 residues: Growth/differentiation factor 8 (375 aa).

Residues Met1–Leu23 form the signal peptide. The propeptide occupies Asn24 to Arg266. Asn48 and Asn71 each carry an N-linked (GlcNAc...) asparagine glycan. Cystine bridges form between Cys272-Cys282, Cys281-Cys340, Cys309-Cys372, and Cys313-Cys374.

The protein belongs to the TGF-beta family. In terms of assembly, homodimer; disulfide-linked. Interacts with WFIKKN2, leading to inhibit its activity. Interacts with FSTL3. In terms of processing, synthesized as large precursor molecule that undergoes proteolytic cleavage to generate an N-terminal propeptide and a disulfide linked C-terminal dimer, which is the biologically active molecule. The circulating form consists of a latent complex of the C-terminal dimer and other proteins, including its propeptide, which maintain the C-terminal dimer in a latent, inactive state. Ligand activation requires additional cleavage of the prodomain by a tolloid-like metalloproteinase.

It is found in the secreted. Functionally, acts specifically as a negative regulator of skeletal muscle growth. The polypeptide is Growth/differentiation factor 8 (MSTN) (Ovis aries (Sheep)).